Here is a 689-residue protein sequence, read N- to C-terminus: Elongation factor G (689 aa).

In terms of domain architecture, tr-type G spans 9-283 (AKFRNIGIMA…AIVEFMPSPL (275 aa)). Residues 18–25 (AHIDAGKT), 82–86 (DTPGH), and 136–139 (NKMD) each bind GTP.

This sequence belongs to the TRAFAC class translation factor GTPase superfamily. Classic translation factor GTPase family. EF-G/EF-2 subfamily.

The protein localises to the cytoplasm. Functionally, catalyzes the GTP-dependent ribosomal translocation step during translation elongation. During this step, the ribosome changes from the pre-translocational (PRE) to the post-translocational (POST) state as the newly formed A-site-bound peptidyl-tRNA and P-site-bound deacylated tRNA move to the P and E sites, respectively. Catalyzes the coordinated movement of the two tRNA molecules, the mRNA and conformational changes in the ribosome. This chain is Elongation factor G, found in Clostridium botulinum (strain Kyoto / Type A2).